The sequence spans 144 residues: Maximins 3/H14 (144 aa).

The first 18 residues, 1-18, serve as a signal peptide directing secretion; sequence MNFKYIVAVSFLIASAYA. 2 propeptides span residues 19–43 and 73–122; these read RSVQ…REIR and RTAE…KKEK. Residue Ile143 is modified to Isoleucine amide.

It belongs to the bombinin family. In terms of tissue distribution, expressed by the skin glands.

The protein resides in the secreted. Functionally, maximin-3 shows antibacterial activity against both Gram-positive and Gram-negative bacteria. It also shows antimicrobial activity against the fungus C.albicans, but not against A.flavus nor P.uticale. It has little hemolytic activity. It possess a significant cytotoxicity against tumor cell lines. It possess a significant anti-HIV activity. It shows high spermicidal activity. Its function is as follows. Maximin-H14 shows antimicrobial activity against bacteria and against the fungus C.albicans. Shows strong hemolytic activity. This is Maximins 3/H14 from Bombina maxima (Giant fire-bellied toad).